A 763-amino-acid chain; its full sequence is Putative pentatricopeptide repeat-containing protein At1g74580 (763 aa).

19 PPR repeats span residues 39-69 (TLST…MREN), 75-109 (LEGV…DCEP), 110-144 (TVFS…GITP), 145-179 (DVYS…GCEM), 180-214 (NVVA…GVSL), 215-249 (CLST…GVLP), 250-284 (NLFT…GPKP), 285-319 (DVIT…GLEP), 320-354 (DSYT…GFVP), 355-389 (DQFT…GIKP), 390-424 (NVIL…GLIP), 425-459 (EVQT…GYFP), 460-494 (DIFT…GVDP), 495-529 (DVYT…GCAP), 530-564 (NLFT…SVNP), 565-595 (DAVT…MEEA), 601-635 (STPT…CLGP), 636-670 (DGYT…GFIP), and 671-705 (SLTT…GLVP).

Belongs to the PPR family. P subfamily.

This Arabidopsis thaliana (Mouse-ear cress) protein is Putative pentatricopeptide repeat-containing protein At1g74580.